The chain runs to 204 residues: 3-isopropylmalate dehydratase small subunit (204 aa).

It belongs to the LeuD family. LeuD type 1 subfamily. Heterodimer of LeuC and LeuD.

It carries out the reaction (2R,3S)-3-isopropylmalate = (2S)-2-isopropylmalate. Its pathway is amino-acid biosynthesis; L-leucine biosynthesis; L-leucine from 3-methyl-2-oxobutanoate: step 2/4. In terms of biological role, catalyzes the isomerization between 2-isopropylmalate and 3-isopropylmalate, via the formation of 2-isopropylmaleate. This chain is 3-isopropylmalate dehydratase small subunit, found in Roseiflexus sp. (strain RS-1).